Here is a 471-residue protein sequence, read N- to C-terminus: Mixed lineage kinase domain-like protein (471 aa).

The interval 1–149 (MENLKHIITL…DADEDRRAFQ (149 aa)) is N-terminal bundle and brace (NBB); mediates INSP6 binding. A coiled-coil region spans residues 55–84 (SEKLTTAMNRFKAALEEANGEIEKFSNRSN). Ser-125 is modified (phosphoserine). Residues 139 to 180 (QDADEDRRAFQMLRRDNEKIEASLRRLEINMKEIKETLRQYL) are a coiled coil. The region spanning 194-469 (KEIKKEQLSG…DEILKKLSTF (276 aa)) is the Protein kinase domain. ATP-binding positions include 209-217 (LRENEVSTL) and Lys-230. Position 357 is a phosphothreonine; by RIPK3 (Thr-357). Phosphoserine; by RIPK3 occurs at positions 358 and 360.

It belongs to the protein kinase superfamily. As to quaternary structure, homooligomer. Homotrimer; forms homotrimers on necroptosis induction. Upon TNF-induced necrosis, forms in complex with PGAM5, RIPK1 and RIPK3. Within this complex, may play a role in the proper targeting of RIPK1-RIPK3 to its downstream effector PGAM5. Interacts with RIPK3; the interaction is direct and promotes its phosphorylation and subsequent activation. Post-translationally, phosphorylation by RIPK3 induces a conformational switch that is required for necroptosis. It also induces homotrimerization and localization to the plasma membrane.

Its subcellular location is the cytoplasm. It is found in the cell membrane. The protein localises to the nucleus. With respect to regulation, activated via binding to highly phosphorylated inositol phosphates such as inositolhexakisphosphate (InsP6) which mediates the release of an N-terminal auto-inhibitory region. Activation requires not only RIPK3-dependent phosphorylation but also binding to highly phosphorylated inositol phosphates. Inhibited by necrosulfonamide, a specific inhibitor of necroptosis that targets Cys-86. In terms of biological role, pseudokinase that plays a key role in TNF-induced necroptosis, a programmed cell death process. Does not have protein kinase activity. Activated following phosphorylation by RIPK3, leading to homotrimerization, localization to the plasma membrane and execution of programmed necrosis characterized by calcium influx and plasma membrane damage. In addition to TNF-induced necroptosis, necroptosis can also take place in the nucleus in response to orthomyxoviruses infection: following activation by ZBP1, MLKL is phosphorylated by RIPK3 in the nucleus, triggering disruption of the nuclear envelope and leakage of cellular DNA into the cytosol.following ZBP1 activation, which senses double-stranded Z-RNA structures, nuclear RIPK3 catalyzes phosphorylation and activation of MLKL, promoting disruption of the nuclear envelope and leakage of cellular DNA into the cytosol. Binds to highly phosphorylated inositol phosphates such as inositolhexakisphosphate (InsP6) which is essential for its necroptotic function. In Homo sapiens (Human), this protein is Mixed lineage kinase domain-like protein.